The following is a 186-amino-acid chain: Temperature-induced lipocalin-1 (186 aa).

The HPR (Hydrophobic proline-rich) signature appears at 90-97 (PPFLPIIP). The disordered stretch occupies residues 154 to 174 (KLHKTPQSDTPPESNTAPEDS). The span at 158–171 (TPQSDTPPESNTAP) shows a compositional bias: polar residues.

The protein belongs to the calycin superfamily. Lipocalin family. As to expression, expressed ubiquitously at similar levels, except in dry seeds (at protein level). Present in seeds.

Its subcellular location is the cell membrane. The protein localises to the cytoplasm. It localises to the plastid. It is found in the chloroplast membrane. In terms of biological role, involved in basal (BT) and acquired thermotolerance (AT), probably by preventing plasma membrane lipids peroxidation induced by severe heat-shock (HS). Lipocalin that confers protection against oxidative stress caused by heat, freezing, paraquat and light. Confers resistance to high salt (NaCl) levels, probably by protecting chloroplasts from ion toxicity via ion homeostasis maintenance. Required for seed longevity by ensuring polyunsaturated lipids integrity. The sequence is that of Temperature-induced lipocalin-1 from Arabidopsis thaliana (Mouse-ear cress).